A 175-amino-acid polypeptide reads, in one-letter code: ATP synthase subunit delta (175 aa).

The protein belongs to the ATPase delta chain family. As to quaternary structure, F-type ATPases have 2 components, F(1) - the catalytic core - and F(0) - the membrane proton channel. F(1) has five subunits: alpha(3), beta(3), gamma(1), delta(1), epsilon(1). F(0) has three main subunits: a(1), b(2) and c(10-14). The alpha and beta chains form an alternating ring which encloses part of the gamma chain. F(1) is attached to F(0) by a central stalk formed by the gamma and epsilon chains, while a peripheral stalk is formed by the delta and b chains.

The protein resides in the cell inner membrane. Its function is as follows. F(1)F(0) ATP synthase produces ATP from ADP in the presence of a proton or sodium gradient. F-type ATPases consist of two structural domains, F(1) containing the extramembraneous catalytic core and F(0) containing the membrane proton channel, linked together by a central stalk and a peripheral stalk. During catalysis, ATP synthesis in the catalytic domain of F(1) is coupled via a rotary mechanism of the central stalk subunits to proton translocation. In terms of biological role, this protein is part of the stalk that links CF(0) to CF(1). It either transmits conformational changes from CF(0) to CF(1) or is implicated in proton conduction. In Xanthomonas axonopodis pv. citri (strain 306), this protein is ATP synthase subunit delta.